Reading from the N-terminus, the 156-residue chain is SsrA-binding protein (156 aa).

The segment at 134–156 (YDKRETLKRKEQDREMARALRKR) is disordered.

It belongs to the SmpB family.

Its subcellular location is the cytoplasm. Functionally, required for rescue of stalled ribosomes mediated by trans-translation. Binds to transfer-messenger RNA (tmRNA), required for stable association of tmRNA with ribosomes. tmRNA and SmpB together mimic tRNA shape, replacing the anticodon stem-loop with SmpB. tmRNA is encoded by the ssrA gene; the 2 termini fold to resemble tRNA(Ala) and it encodes a 'tag peptide', a short internal open reading frame. During trans-translation Ala-aminoacylated tmRNA acts like a tRNA, entering the A-site of stalled ribosomes, displacing the stalled mRNA. The ribosome then switches to translate the ORF on the tmRNA; the nascent peptide is terminated with the 'tag peptide' encoded by the tmRNA and targeted for degradation. The ribosome is freed to recommence translation, which seems to be the essential function of trans-translation. The polypeptide is SsrA-binding protein (Latilactobacillus sakei subsp. sakei (strain 23K) (Lactobacillus sakei subsp. sakei)).